Consider the following 495-residue polypeptide: YTH domain-containing protein ECT3 (495 aa).

A YTH domain is found at 261–398 (AKFYVIKSYS…EQGIKVIKIF (138 aa)). Residues 267–269 (KSY), Asp-273, 283–284 (WS), Asn-316, Trp-340, Trp-345, and Trp-353 each bind RNA.

In terms of tissue distribution, expressed in the shoot apex, at the sites of leaf formation, and in emerging leaves.

It is found in the cytoplasm. Functionally, specifically recognizes and binds N6-methyladenosine (m6A)-containing RNAs, and regulates mRNA stability. M6A is a modification present at internal sites of mRNAs and some non-coding RNAs and plays a role in mRNA stability and processing. Required for the correct timing of leaf formation and normal leaf morphology. Required for proper trichome branching and morphology. Functions redundantly with ECT2. This Arabidopsis thaliana (Mouse-ear cress) protein is YTH domain-containing protein ECT3.